The sequence spans 525 residues: Ribonuclease Y (525 aa).

Residues 3–23 traverse the membrane as a helical segment; the sequence is IFFISLVLIVLASVVFFVGGF. One can recognise a KH domain in the interval 215 to 300; that stretch reads ALSVVHIQSD…KAYEDAKKEI (86 aa). The HD domain occupies 341-433; it reads LLQHSREVAM…VDAANVISLS (93 aa).

It belongs to the RNase Y family.

It is found in the cell membrane. Endoribonuclease that initiates mRNA decay. This is Ribonuclease Y from Chlorobium phaeobacteroides (strain DSM 266 / SMG 266 / 2430).